The primary structure comprises 1451 residues: Glutamate receptor ionotropic, NMDA 2A (1451 aa).

A signal peptide spans 1–20 (MGMFVLLLYTFLYAGDLGHG). At 21 to 547 (AEKSFPVLNI…PSAFLEPFSA (527 aa)) the chain is on the extracellular side. Asn67 is a glycosylation site (N-linked (GlcNAc...) asparagine). Cys79 and Cys312 are joined by a disulfide. Residues His120, Asp258, and Asp274 each contribute to the Zn(2+) site. N-linked (GlcNAc...) asparagine glycosylation is found at Asn332, Asn372, Asn435, and Asn436. Cystine bridges form between Cys421–Cys447 and Cys428–Cys448. Residues Ser503, Thr505, and Arg510 each contribute to the L-glutamate site. N-linked (GlcNAc...) asparagine glycosylation occurs at Asn533. The helical transmembrane segment at 548–568 (SVWVMMFVMLLLVSAMAVFIF) threads the bilayer. Residues 569–592 (EYFSPVGYNRNLAQGKDPHGPSFT) are Cytoplasmic-facing. The pore-forming stretch occupies residues 591-612 (FTIGKAVWLLWGLVFNNSVPVQ). The discontinuously helical intramembrane region spans 593 to 612 (IGKAVWLLWGLVFNNSVPVQ). Residues 613–617 (NPKGT) lie on the Cytoplasmic side of the membrane. Residues 618–637 (TSKIIVSIWAFFAVIFLASY) form a helical membrane-spanning segment. At 638–808 (TANLAAFMIQ…VMSSQLDIDN (171 aa)) the chain is on the extracellular side. N-linked (GlcNAc...) asparagine glycosylation occurs at Asn679. Positions 681, 682, and 723 each coordinate L-glutamate. Cys737 and Cys792 are disulfide-bonded. Residues 809–829 (MAGVFYMLAAAMALSLITFVW) form a helical membrane-spanning segment. The Cytoplasmic segment spans residues 830–1451 (EHLFYWKLRF…KKMPSLESDV (622 aa)). Over residues 1011–1022 (TLRQTQGSVNEN) the composition is skewed to polar residues. Disordered regions lie at residues 1011 to 1080 (TLRQ…VSAK) and 1100 to 1165 (NRDK…GRLP). Basic and acidic residues-rich tracts occupy residues 1055–1073 (CHID…DNLK), 1100–1113 (NRDK…DKEP), and 1138–1149 (YQDHNDNYRKTE).

This sequence belongs to the glutamate-gated ion channel (TC 1.A.10.1) family. Heterotetramer. Forms heterotetrameric channels composed of two GluN1/zeta subunits (GRIN1), and two identical GluN2/epsilon subunits (GRIN2A, GRIN2B, GRIN2C or GRIN2D) or GluN3 subunits (GRIN3A or GRIN3B) (in vitro). In vivo, the subunit composition may depend on the expression levels of the different subunits.

The protein localises to the cell membrane. It is found in the postsynaptic cell membrane. It carries out the reaction Ca(2+)(in) = Ca(2+)(out). The catalysed reaction is Na(+)(in) = Na(+)(out). The enzyme catalyses K(+)(in) = K(+)(out). Its function is as follows. Component of N-methyl-D-aspartate (NMDA) receptors (NMDARs) that function as heterotetrameric, ligand-gated cation channels with high calcium permeability and voltage-dependent block by Mg(2+). MDARs participate in synaptic plasticity. Channel activation requires binding of the neurotransmitter L-glutamate to the GluN2 subunit, glycine binding to the GluN1 subunit, plus membrane depolarization to eliminate channel inhibition by Mg(2+). NMDARs mediate simultaneously the potasium efflux and the influx of calcium and sodium. Each GluN2 subunit confers differential attributes to channel properties, including activation, deactivation and desensitization kinetics, pH sensitivity, Ca2(+) permeability, and binding to allosteric modulators. Plays a role in dendritic branching in brain neurons and in synaptic plasticity. The sequence is that of Glutamate receptor ionotropic, NMDA 2A from Xenopus laevis (African clawed frog).